A 385-amino-acid chain; its full sequence is Ethanolamine kinase 2 (385 aa).

This sequence belongs to the choline/ethanolamine kinase family. Expressed in testis and liver. Low expression in ovary and kidney.

The enzyme catalyses ethanolamine + ATP = phosphoethanolamine + ADP + H(+). It participates in phospholipid metabolism; phosphatidylethanolamine biosynthesis; phosphatidylethanolamine from ethanolamine: step 1/3. Functionally, highly specific for ethanolamine phosphorylation. Does not have choline kinase activity. This is Ethanolamine kinase 2 (Etnk2) from Mus musculus (Mouse).